Reading from the N-terminus, the 445-residue chain is MEKIKVALVSLGCDKNRIDSELMLYKLNEEAELVKNPKEAQVIIVNTCGFIETAKEESINTILQMASYKKTHNCKVLVVTGCLTQRYKGELKELIPEMDIMLGVNDYDKLLESIKVFLKSGEKSFYHKYSDTKINEGNRILTTPTYTAYVRIAEGCNNFCTYCAIPRIRGKYRSRKKENILKEVENLAKQGVKEIILIAQDTTMYGIDIYGKKVLHELLRDISKVEGVKWIRLLYCYPEEITKELIEEIKNNDKVCKYLDLPIQQISNSVLKRMGRKTTKETIINIIKKLRKEIEGITLRTSLIVGFPGETEGEFSELKEFVSDVKLDKLGVFKYSKEEGTSAALMEEQIDEEIKEKREEEIMILQQSISKDINKEKIGKIYEVIVEGIKEDMYYGRNYEMSPEIDGEIYFEKDENVRIGDIIKVKVTHSLEYDLIGVVYNELSK.

Positions 4 to 119 constitute an MTTase N-terminal domain; that stretch reads IKVALVSLGC…LLESIKVFLK (116 aa). [4Fe-4S] cluster is bound by residues Cys-13, Cys-48, Cys-82, Cys-156, Cys-160, and Cys-163. Residues 142-372 form the Radical SAM core domain; sequence TTPTYTAYVR…MILQQSISKD (231 aa). The region spanning 375-441 is the TRAM domain; that stretch reads KEKIGKIYEV…EYDLIGVVYN (67 aa).

The protein belongs to the methylthiotransferase family. RimO subfamily. [4Fe-4S] cluster is required as a cofactor.

It is found in the cytoplasm. It carries out the reaction L-aspartate(89)-[ribosomal protein uS12]-hydrogen + (sulfur carrier)-SH + AH2 + 2 S-adenosyl-L-methionine = 3-methylsulfanyl-L-aspartate(89)-[ribosomal protein uS12]-hydrogen + (sulfur carrier)-H + 5'-deoxyadenosine + L-methionine + A + S-adenosyl-L-homocysteine + 2 H(+). In terms of biological role, catalyzes the methylthiolation of an aspartic acid residue of ribosomal protein uS12. The polypeptide is Ribosomal protein uS12 methylthiotransferase RimO (Clostridium botulinum (strain Okra / Type B1)).